A 178-amino-acid chain; its full sequence is Putative metal-dependent hydrolase GK0616 (178 aa).

Positions 68, 161, and 165 each coordinate Zn(2+).

It belongs to the metal hydrolase YfiT family. As to quaternary structure, homodimer. Zn(2+) serves as cofactor.

It is found in the cytoplasm. Functionally, possible metal-dependent hydrolase. The protein is Putative metal-dependent hydrolase GK0616 of Geobacillus kaustophilus (strain HTA426).